Reading from the N-terminus, the 133-residue chain is Large ribosomal subunit protein bL19 (133 aa).

Residues 114–133 form a disordered region; that stretch reads IAERQMTAASKEEPAEKSEA. A compositionally biased stretch (basic and acidic residues) spans 123–133; the sequence is SKEEPAEKSEA.

The protein belongs to the bacterial ribosomal protein bL19 family.

Its function is as follows. This protein is located at the 30S-50S ribosomal subunit interface and may play a role in the structure and function of the aminoacyl-tRNA binding site. The protein is Large ribosomal subunit protein bL19 of Phenylobacterium zucineum (strain HLK1).